Here is a 107-residue protein sequence, read N- to C-terminus: Small ribosomal subunit protein uS17 (107 aa).

The protein belongs to the universal ribosomal protein uS17 family. In terms of assembly, part of the 30S ribosomal subunit.

Its function is as follows. One of the primary rRNA binding proteins, it binds specifically to the 5'-end of 16S ribosomal RNA. The protein is Small ribosomal subunit protein uS17 of Aquifex aeolicus (strain VF5).